The primary structure comprises 52 residues: uncharacterized protein (52 aa).

Residues 1–52 (MSLRPCLTPSSMQYSDIYIPTPTPTHHTHTPTPHPHPHTHTHTHHNPNPTLF) are disordered. A compositionally biased stretch (basic residues) spans 35 to 45 (PHPHTHTHTHH).

This is an uncharacterized protein from Saccharomyces cerevisiae (strain ATCC 204508 / S288c) (Baker's yeast).